The sequence spans 1113 residues: Lon protease homolog, mitochondrial (1113 aa).

The N-terminal 61 residues, methionine 1–arginine 61, are a transit peptide targeting the mitochondrion. Residues serine 42–serine 196 are disordered. Composition is skewed to basic and acidic residues over residues lysine 64–alanine 99, lysine 124–asparagine 143, and aspartate 178–leucine 192. One can recognise a Lon N-terminal domain in the interval valine 204 to leucine 456. Glycine 609–threonine 616 is a binding site for ATP. The span at leucine 828 to threonine 858 shows a compositional bias: basic and acidic residues. The tract at residues leucine 828–valine 864 is disordered. One can recognise a Lon proteolytic domain in the interval threonine 898–aspartate 1084. Catalysis depends on residues serine 990 and lysine 1033.

This sequence belongs to the peptidase S16 family. As to quaternary structure, homohexamer or homoheptamer. Organized in a ring with a central cavity.

Its subcellular location is the mitochondrion matrix. It carries out the reaction Hydrolysis of proteins in presence of ATP.. ATP-dependent serine protease that mediates the selective degradation of misfolded, unassembled or oxidatively damaged polypeptides as well as certain short-lived regulatory proteins in the mitochondrial matrix. May also have a chaperone function in the assembly of inner membrane protein complexes. Participates in the regulation of mitochondrial gene expression and in the maintenance of the integrity of the mitochondrial genome. Binds to mitochondrial DNA in a site-specific manner. This chain is Lon protease homolog, mitochondrial (pim1), found in Aspergillus niger (strain ATCC MYA-4892 / CBS 513.88 / FGSC A1513).